Consider the following 479-residue polypeptide: Probable aspartic-type endopeptidase OPSB (479 aa).

Residues 1-19 (MRGDSFIWSLTTAASLLYA) form the signal peptide. The Peptidase A1 domain occupies 58-393 (SGKTVSQDLD…DLDNNEISIA (336 aa)). N-linked (GlcNAc...) asparagine glycosylation occurs at Asn68. The active site involves Asp76. An N-linked (GlcNAc...) asparagine glycan is attached at Asn121. The active site involves Asp275. Asn398 carries an N-linked (GlcNAc...) asparagine glycan. A disordered region spans residues 435-454 (LSGIETGVPGARPTSRGAAP). A lipid anchor (GPI-anchor amidated glycine) is attached at Gly451. Positions 452-479 (AAPTMRPDVTFGVAAAGLAGAGILFAFM) are cleaved as a propeptide — removed in mature form.

It belongs to the peptidase A1 family.

It is found in the cell membrane. Functionally, probable GPI-anchored aspartic-type endopeptidase which contributes to virulence. The sequence is that of Probable aspartic-type endopeptidase OPSB (OPSB) from Arthroderma otae (strain ATCC MYA-4605 / CBS 113480) (Microsporum canis).